A 468-amino-acid polypeptide reads, in one-letter code: ATP synthase subunit beta (468 aa).

Gly155–Thr162 serves as a coordination point for ATP.

It belongs to the ATPase alpha/beta chains family. F-type ATPases have 2 components, CF(1) - the catalytic core - and CF(0) - the membrane proton channel. CF(1) has five subunits: alpha(3), beta(3), gamma(1), delta(1), epsilon(1). CF(0) has three main subunits: a(1), b(2) and c(9-12). The alpha and beta chains form an alternating ring which encloses part of the gamma chain. CF(1) is attached to CF(0) by a central stalk formed by the gamma and epsilon chains, while a peripheral stalk is formed by the delta and b chains.

It is found in the cell inner membrane. It catalyses the reaction ATP + H2O + 4 H(+)(in) = ADP + phosphate + 5 H(+)(out). Produces ATP from ADP in the presence of a proton gradient across the membrane. The catalytic sites are hosted primarily by the beta subunits. This chain is ATP synthase subunit beta, found in Bdellovibrio bacteriovorus (strain ATCC 15356 / DSM 50701 / NCIMB 9529 / HD100).